We begin with the raw amino-acid sequence, 553 residues long: Putative transport protein AHA_3492 (553 aa).

5 helical membrane passes run I4–W24, V29–L49, F65–S85, G95–F115, and M158–I178. RCK C-terminal domains lie at A191–E276 and E279–N361. 6 consecutive transmembrane segments (helical) span residues M371 to L391, A403 to F425, I439 to I459, A465 to A485, Y493 to A513, and L533 to A553.

Belongs to the AAE transporter (TC 2.A.81) family. YidE subfamily.

The protein resides in the cell membrane. The protein is Putative transport protein AHA_3492 of Aeromonas hydrophila subsp. hydrophila (strain ATCC 7966 / DSM 30187 / BCRC 13018 / CCUG 14551 / JCM 1027 / KCTC 2358 / NCIMB 9240 / NCTC 8049).